A 296-amino-acid polypeptide reads, in one-letter code: Putative methyltransferase HI_1523 (296 aa).

Belongs to the N(4)/N(6)-methyltransferase family.

This chain is Putative methyltransferase HI_1523, found in Haemophilus influenzae (strain ATCC 51907 / DSM 11121 / KW20 / Rd).